Consider the following 192-residue polypeptide: Protein GrpE (192 aa).

The segment at M1–N41 is disordered.

Belongs to the GrpE family. As to quaternary structure, homodimer.

It is found in the cytoplasm. In terms of biological role, participates actively in the response to hyperosmotic and heat shock by preventing the aggregation of stress-denatured proteins, in association with DnaK and GrpE. It is the nucleotide exchange factor for DnaK and may function as a thermosensor. Unfolded proteins bind initially to DnaJ; upon interaction with the DnaJ-bound protein, DnaK hydrolyzes its bound ATP, resulting in the formation of a stable complex. GrpE releases ADP from DnaK; ATP binding to DnaK triggers the release of the substrate protein, thus completing the reaction cycle. Several rounds of ATP-dependent interactions between DnaJ, DnaK and GrpE are required for fully efficient folding. This chain is Protein GrpE, found in Lactobacillus johnsonii (strain CNCM I-12250 / La1 / NCC 533).